We begin with the raw amino-acid sequence, 891 residues long: Protein kinase kin1 (891 aa).

A disordered region spans residues 65 to 116 (GYISPSSQSPHHGPVRSPSSRKPLPASPSRTRDHSLRVPVSGHSYSADEKPR). A Protein kinase domain is found at 125 to 395 (YVLGKTIGAG…LEEVLNHPWM (271 aa)). ATP-binding positions include 131-139 (IGAGSMGKV) and K154. The Proton acceptor role is filled by D266. Phosphothreonine is present on T528. Disordered regions lie at residues 528 to 699 (TPVS…RNNR), 728 to 747 (TMGN…TDKL), and 805 to 841 (TPTK…LDDN). Low complexity-rich tracts occupy residues 529–538 (PVSSVPSSPV) and 583–603 (HSPS…IFRR). S535 and S536 each carry phosphoserine. Polar residues-rich tracts occupy residues 612-629 (KSST…TSQS), 649-659 (LVTQSAIGRST), 669-699 (ISSQ…RNNR), 728-742 (TMGN…SPSK), and 820-829 (YGSNSTTDSY). A KA1 domain is found at 842 to 891 (GESPASNLAFEIYIVKVPILSLRGVSFHRISGNSWQYKTLASRILNELKL).

It belongs to the protein kinase superfamily. Ser/Thr protein kinase family.

The protein localises to the cytoplasm. It catalyses the reaction L-seryl-[protein] + ATP = O-phospho-L-seryl-[protein] + ADP + H(+). The enzyme catalyses L-threonyl-[protein] + ATP = O-phospho-L-threonyl-[protein] + ADP + H(+). Has a role in establishing the characteristic rod cell shape. Important for cell polarity and is involved in directing growth to the cell ends. The protein is Protein kinase kin1 (kin1) of Schizosaccharomyces pombe (strain 972 / ATCC 24843) (Fission yeast).